The following is a 251-amino-acid chain: Insulin-induced gene 1 protein (251 aa).

Over 1–58 (MPRLEEHCWSCSCSTSVKTKDLSSAGWIVCKTGEMMSIITSVLSHAYGSLHSLQSANL) the chain is Cytoplasmic. The helical transmembrane segment at 59 to 81 (IRRGLVLFIVGVVLALVLNLLQI) threads the bilayer. Over 82-100 (QRNVTLFPEEVLDTLFSSA) the chain is Extracellular. A helical membrane pass occupies residues 101–118 (WWIPLCCGTAAAVVGLLY). The Cytoplasmic segment spans residues 119 to 133 (PCLDHHLGEPHKFKR). A helical transmembrane segment spans residues 134-156 (EWASVMRCIAVFVGINHASAKLD). Over 157–159 (FAN) the chain is Extracellular. Residues 160-178 (NVQLSLTLAALSLGLWWTF) form a helical membrane-spanning segment. The Cytoplasmic portion of the chain corresponds to 179–183 (DRSRS). The chain crosses the membrane as a helical span at residues 184–205 (GFGLGLTTALLATLIAQLLVYN). The Extracellular segment spans residues 206-219 (GIYQYTSPDFLYVR). Residues 220-237 (SWLPCIFFSGGVTVGNIG) form a helical membrane-spanning segment. At 238–251 (RQLAMGSTEKIHND) the chain is on the cytoplasmic side. The KxHxx motif lies at 245–251 (TEKIHND).

Belongs to the INSIG family. As to quaternary structure, interacts with scap; interaction is direct and only takes place in the presence of sterols; it prevents interaction between scap and the coat protein complex II (COPII). Associates with the SCAP-SREBP complex; association is mediated via its interaction with scap and only takes place in the presence of sterols.

Its subcellular location is the endoplasmic reticulum membrane. Functionally, oxysterol-binding protein that mediates feedback control of cholesterol synthesis by controlling both endoplasmic reticulum to Golgi transport of scap and degradation of hmgcr. Acts as a negative regulator of cholesterol biosynthesis by mediating the retention of the SCAP-SREBP complex in the endoplasmic reticulum, thereby blocking the processing of sterol regulatory element-binding proteins (SREBPs). Binds oxysterol, including 25-hydroxycholesterol, regulating interaction with scap and retention of the SCAP-SREBP complex in the endoplasmic reticulum. In presence of oxysterol, interacts with scap, retaining the SCAP-SREBP complex in the endoplasmic reticulum, thereby preventing scap from escorting SREBPs to the Golgi. Sterol deprivation reduces oxysterol-binding, disrupting the interaction between insig1 and scap, thereby promoting Golgi transport of the SCAP-SREBP complex, followed by processing and nuclear translocation of SREBPs. Also regulates cholesterol synthesis by regulating degradation of hmgcr. In Danio rerio (Zebrafish), this protein is Insulin-induced gene 1 protein.